The primary structure comprises 330 residues: MQFIDQARITVRGGRGGDGIAAFRREKYVPAGGPSGGDGGHGGPVVLEADSNLQTLLDFKYKRLFAADDGRRGGPNKCTGASGRDLVIKVPCGTEVRHLATGILLGDLTDPGERLTVAFGGRGGLGNAHYLSNRNRAPEKFTEGRDGEEWPLQLELKLLAEVGIIGLPNAGKSTLIAVLSAARPKIADYPFTTLVPNLGVVRRPSGDGTVFADIPGLIAGAAQGAGLGHDFLRHIERTRLLIHVVDAGADDPVGDLRVVEKELEAYGHGLVDRPRLLVLNKQELLLDEQLPELSNELEQVSGRAPLCISAAMGRNLDQLLERVWKELGIA.

The region spanning 1 to 159 (MQFIDQARIT…WPLQLELKLL (159 aa)) is the Obg domain. The 169-residue stretch at 160-328 (AEVGIIGLPN…LLERVWKELG (169 aa)) folds into the OBG-type G domain. Residues 166–173 (GLPNAGKS), 191–195 (FTTLV), 213–216 (DIPG), 280–283 (NKQE), and 309–311 (SAA) contribute to the ATP site. Residues S173 and T193 each coordinate Mg(2+).

It belongs to the TRAFAC class OBG-HflX-like GTPase superfamily. OBG GTPase family. In terms of assembly, monomer. Mg(2+) is required as a cofactor.

It localises to the cytoplasm. In terms of biological role, an essential GTPase which binds GTP, GDP and possibly (p)ppGpp with moderate affinity, with high nucleotide exchange rates and a fairly low GTP hydrolysis rate. Plays a role in control of the cell cycle, stress response, ribosome biogenesis and in those bacteria that undergo differentiation, in morphogenesis control. This is GTPase Obg from Parasynechococcus marenigrum (strain WH8102).